The following is a 468-amino-acid chain: Adenylosuccinate synthetase (468 aa).

GTP contacts are provided by residues 23–29 and 51–53; these read GDEGKGK and GHE. Residue aspartate 24 is the Proton acceptor of the active site. Aspartate 24 and glycine 51 together coordinate Mg(2+). IMP is bound by residues 24-27, 49-52, threonine 142, arginine 156, asparagine 238, threonine 253, and arginine 317; these read DEGK and NSGH. The active-site Proton donor is the histidine 52. 313-319 contacts substrate; that stretch reads VTTGRTR. GTP contacts are provided by residues arginine 319 and 345 to 347; that span reads KLD.

This sequence belongs to the adenylosuccinate synthetase family. In terms of assembly, homodimer. Requires Mg(2+) as cofactor.

It is found in the cytoplasm. The catalysed reaction is IMP + L-aspartate + GTP = N(6)-(1,2-dicarboxyethyl)-AMP + GDP + phosphate + 2 H(+). The protein operates within purine metabolism; AMP biosynthesis via de novo pathway; AMP from IMP: step 1/2. Its function is as follows. Plays an important role in the salvage pathway for purine nucleotide biosynthesis. Catalyzes the first committed step in the biosynthesis of AMP from IMP. The sequence is that of Adenylosuccinate synthetase from Theileria annulata.